The chain runs to 137 residues: 14 kDa proline-rich protein DC2.15 (137 aa).

The N-terminal stretch at 1 to 25 (MGSKNSASVALFFTLNILFFALVSS) is a signal peptide. The interval 30-53 (PDPYKPKPKPTPKPTPTPYPSAGK) is disordered. Positions 38-48 (KPTPKPTPTPY) are enriched in pro residues. The helical transmembrane segment at 88–104 (LEGLVNLEAAVCLCTAI) threads the bilayer.

The protein localises to the membrane. Its function is as follows. May be connected with the initiation of embryogenesis or with the metabolic changes produced by the removal of auxins. The sequence is that of 14 kDa proline-rich protein DC2.15 from Daucus carota (Wild carrot).